An 864-amino-acid polypeptide reads, in one-letter code: DNA double-strand break repair Rad50 ATPase (864 aa).

ATP contacts are provided by residues 32 to 38 (NGAGKSS) and glutamine 131. Coiled-coil stretches lie at residues 176 to 319 (RELD…EKAI) and 376 to 413 (DIDK…EKNE). Residues 380–478 (VNSLEQKVEE…ELNKIEREYR (99 aa)) enclose the Zinc-hook domain. Residues cysteine 426 and cysteine 429 each contribute to the Zn(2+) site. Positions 440-697 (KIIKEAKSYI…DREKIINAIN (258 aa)) form a coiled coil.

It belongs to the SMC family. RAD50 subfamily. In terms of assembly, homodimer. Forms a heterotetramer composed of two Mre11 subunits and two Rad50 subunits. The cofactor is Zn(2+).

In terms of biological role, part of the Rad50/Mre11 complex, which is involved in the early steps of DNA double-strand break (DSB) repair. The complex may facilitate opening of the processed DNA ends to aid in the recruitment of HerA and NurA. Rad50 controls the balance between DNA end bridging and DNA resection via ATP-dependent structural rearrangements of the Rad50/Mre11 complex. The sequence is that of DNA double-strand break repair Rad50 ATPase from Saccharolobus solfataricus (strain ATCC 35092 / DSM 1617 / JCM 11322 / P2) (Sulfolobus solfataricus).